Consider the following 892-residue polypeptide: Ice-binding protein 1 (892 aa).

An N-terminal signal peptide occupies residues 1–23; that stretch reads MNHSIKKTYLVFTMLLGFILLAG. C24 is lipidated: N-palmitoyl cysteine. C24 is lipidated: S-diacylglycerol cysteine. BIG2 domains follow at residues 43-111, 134-205, 221-288, 306-386, 392-471, 478-558, and 565-638; these read TSIA…ITAS, TALA…SLGS, SIAL…ITAD, TSIM…TVTV, TSIA…TNLT, NSIV…NLTV, and SIDV…QASL. The Ice-binding site motif (T-A/G-X-T/N) signature appears at 866-869; that stretch reads TGAN.

This sequence belongs to the ice-binding protein family.

The protein localises to the cell outer membrane. In terms of biological role, ice-binding adhesion protein that adsorbs this bacterium onto ice to maintain a favorable position in its aquatic habitat. Inhibits growth of the ice crystals. Has high thermal hysteresis (TH) activity, which is the ability to lower the freezing point of an aqueous solution below its melting point. The TH activity of this protein is approximately 1.4 degrees Celsius at 25 uM and little below 2 degrees Celsius at 80 uM. This Shewanella frigidimarina (strain NCIMB 400) protein is Ice-binding protein 1.